The primary structure comprises 299 residues: Trimeric intracellular cation channel type A (299 aa).

Residues 1-18 (MELLSALSLGELALSFSR) lie on the Lumenal side of the membrane. A helical transmembrane segment spans residues 19–39 (VPLFPVFDLSYFIVSILYLKY). Topologically, residues 40 to 51 (EPGAVELSRRHP) are cytoplasmic. A helical transmembrane segment spans residues 52 to 72 (IASWLCAMLHCFGSYILADLL). Over 73–85 (LGEPLIDYFSNNS) the chain is Lumenal. Glycine 74 contributes to the Ca(2+) binding site. The chain crosses the membrane as a helical span at residues 86-106 (SILLASAVWYLIFFCPLDLFY). Residues 107 to 144 (KCVCFLPVKLIFVAMKEVVRVRKIAVGIHHAHHHYHHG) lie on the Cytoplasmic side of the membrane. The a 1,2-diacyl-sn-glycero-3-phospho-(1D-myo-inositol-4,5-bisphosphate) site is built by lysine 122 and arginine 126. A helical transmembrane segment spans residues 145-165 (WFVMIATGWVKGSGVALMSNF). Topologically, residues 166-178 (EQLLRGVWKPETN) are lumenal. Residues 179–199 (EILHMSFPTKASLYGAILFTL) form a helical membrane-spanning segment. Residues 200–209 (QQTRWLPVSK) lie on the Cytoplasmic side of the membrane. The chain crosses the membrane as a helical span at residues 210-230 (ASLIFIFTLFMVSCKVFLTAT). Residues 231-234 (HSHS) are Lumenal-facing. The chain crosses the membrane as a helical span at residues 235–255 (SPFDALEGYICPVLFGSACGG). The Cytoplasmic segment spans residues 256–299 (DHHHDNHGGSHSGGGPGAQHSAMPAKSKEELSEGSRKKKAKKAD). The interval 260-299 (DNHGGSHSGGGPGAQHSAMPAKSKEELSEGSRKKKAKKAD) is disordered. The span at 281–290 (KSKEELSEGS) shows a compositional bias: basic and acidic residues.

Belongs to the TMEM38 family. Homotrimer; conformation seems to be controled by binding to diacylglycerol (DAG).

It is found in the sarcoplasmic reticulum membrane. The protein resides in the nucleus membrane. The enzyme catalyses K(+)(in) = K(+)(out). Its activity is regulated as follows. Channel activity is activated by a change of voltage within the sarcoplasmic reticulum lumen and blocked by luminal high Ca(2+) levels. In terms of biological role, intracellular monovalent cation channel required for maintenance of rapid intracellular calcium release. Acts as a potassium counter-ion channel that functions in synchronization with calcium release from intracellular stores. Opened by a change of voltage within the sarcoplasmic reticulum lumen. The sequence is that of Trimeric intracellular cation channel type A from Homo sapiens (Human).